A 260-amino-acid polypeptide reads, in one-letter code: UPF0246 protein Bcep18194_A5551 (260 aa).

This sequence belongs to the UPF0246 family.

The chain is UPF0246 protein Bcep18194_A5551 from Burkholderia lata (strain ATCC 17760 / DSM 23089 / LMG 22485 / NCIMB 9086 / R18194 / 383).